Consider the following 450-residue polypeptide: tRNA modification GTPase MnmE (450 aa).

(6S)-5-formyl-5,6,7,8-tetrahydrofolate-binding residues include arginine 21, glutamate 80, and lysine 119. One can recognise a TrmE-type G domain in the interval 213-373 (GIKVVIIGKP…LEEEIIKSVK (161 aa)). Asparagine 223 lines the K(+) pocket. GTP-binding positions include 223–228 (NVGKST), 242–248 (TDIPGTT), and 267–270 (DTAG). Serine 227 provides a ligand contact to Mg(2+). Positions 242, 244, and 247 each coordinate K(+). Mg(2+) is bound at residue threonine 248. Lysine 450 lines the (6S)-5-formyl-5,6,7,8-tetrahydrofolate pocket.

This sequence belongs to the TRAFAC class TrmE-Era-EngA-EngB-Septin-like GTPase superfamily. TrmE GTPase family. Homodimer. Heterotetramer of two MnmE and two MnmG subunits. K(+) serves as cofactor.

The protein localises to the cytoplasm. Functionally, exhibits a very high intrinsic GTPase hydrolysis rate. Involved in the addition of a carboxymethylaminomethyl (cmnm) group at the wobble position (U34) of certain tRNAs, forming tRNA-cmnm(5)s(2)U34. The protein is tRNA modification GTPase MnmE of Pseudothermotoga lettingae (strain ATCC BAA-301 / DSM 14385 / NBRC 107922 / TMO) (Thermotoga lettingae).